The sequence spans 586 residues: Phosphoenolpyruvate-protein phosphotransferase (586 aa).

The active-site Tele-phosphohistidine intermediate is His201. Positions 308 and 345 each coordinate phosphoenolpyruvate. The Mg(2+) site is built by Glu446 and Asp470. Phosphoenolpyruvate is bound by residues 469-470 and Arg480; that span reads ND. Residue Cys517 is the Proton donor of the active site.

The protein belongs to the PEP-utilizing enzyme family. As to quaternary structure, homodimer. Mg(2+) serves as cofactor.

The protein localises to the cytoplasm. It catalyses the reaction L-histidyl-[protein] + phosphoenolpyruvate = N(pros)-phospho-L-histidyl-[protein] + pyruvate. In terms of biological role, general (non sugar-specific) component of the phosphoenolpyruvate-dependent sugar phosphotransferase system (sugar PTS). This major carbohydrate active-transport system catalyzes the phosphorylation of incoming sugar substrates concomitantly with their translocation across the cell membrane. Enzyme I transfers the phosphoryl group from phosphoenolpyruvate (PEP) to the phosphoryl carrier protein (HPr). The sequence is that of Phosphoenolpyruvate-protein phosphotransferase from Cupriavidus necator (strain ATCC 17699 / DSM 428 / KCTC 22496 / NCIMB 10442 / H16 / Stanier 337) (Ralstonia eutropha).